A 459-amino-acid chain; its full sequence is ATP-binding protein Uup-like (459 aa).

Residues 132–350 enclose the ABC transporter domain; the sequence is FEMEDVSYEI…QQANFWASKA (219 aa). Residue 164–171 participates in ATP binding; it reads GPNGCGKT. Residues 357–375 show a composition bias toward basic and acidic residues; the sequence is AKKSEPLKEESAVKNDRTS. Positions 357–381 are disordered; the sequence is AKKSEPLKEESAVKNDRTSKPKSVK.

This sequence belongs to the ABC transporter superfamily. ABCF family. Uup subfamily.

The protein resides in the cytoplasm. It carries out the reaction ATP + H2O = ADP + phosphate + H(+). Might play a role in ribosome assembly or function; this is missing the first ABC transporter domain compared to paralogs. This Haemophilus influenzae (strain ATCC 51907 / DSM 11121 / KW20 / Rd) protein is ATP-binding protein Uup-like (uup-B).